The following is a 285-amino-acid chain: Shikimate dehydrogenase (NADP(+)) (285 aa).

Residues 20–22 and S67 each bind shikimate; that span reads SIS. The active-site Proton acceptor is the K71. Residues N92 and D107 each coordinate shikimate. NADP(+)-binding positions include 129–133 and I227; that span reads GAGGA. Y229 serves as a coordination point for shikimate. G250 contacts NADP(+).

It belongs to the shikimate dehydrogenase family. As to quaternary structure, homodimer.

The catalysed reaction is shikimate + NADP(+) = 3-dehydroshikimate + NADPH + H(+). Its pathway is metabolic intermediate biosynthesis; chorismate biosynthesis; chorismate from D-erythrose 4-phosphate and phosphoenolpyruvate: step 4/7. Functionally, involved in the biosynthesis of the chorismate, which leads to the biosynthesis of aromatic amino acids. Catalyzes the reversible NADPH linked reduction of 3-dehydroshikimate (DHSA) to yield shikimate (SA). This Streptococcus thermophilus (strain ATCC BAA-491 / LMD-9) protein is Shikimate dehydrogenase (NADP(+)).